The chain runs to 373 residues: Glutamine synthetase (373 aa).

At Ala2 the chain carries N-acetylalanine. Residues 2–25 (ATSASSHLNKGIKQVYMSLPQGEK) are required for glutamine-induced ubiquitination by CRL4(CRBN) and proteasomal degradation. N6-acetyllysine is present on residues Lys11 and Lys14. The GS beta-grasp domain maps to 24–106 (EKVQAMYIWI…VFCEVFKYNR (83 aa)). Tyr104 bears the Phosphotyrosine mark. Residues 113–373 (LRHTCKRIMD…TGDEPFQYKN (261 aa)) enclose the GS catalytic domain. Residue Glu134 coordinates ATP. Glu134, Glu136, Glu196, and Glu203 together coordinate Mn(2+). 203–208 (EFQIGP) provides a ligand contact to ATP. Position 246 to 247 (246 to 247 (NW)) interacts with L-glutamate. His253 contributes to the Mn(2+) binding site. Residues 255 to 257 (NFS), Arg319, and Arg324 contribute to the ATP site. Arg319 lines the L-glutamate pocket. An ADP-binding site is contributed by 336–338 (YFE). Glu338 serves as a coordination point for Mn(2+). Residue Arg340 participates in L-glutamate binding. Residue Ser343 is modified to Phosphoserine.

This sequence belongs to the glutamine synthetase family. As to quaternary structure, decamer; composed of two pentamers. Interacts with PALMD. Interacts with RHOJ. Interacts with BEST2; this interaction tethers a fraction of GLUL to the membrane, causing a decrease of cytosolic glutamine synthase (GS) activity and inhibits the chloride channel activity of BEST2 by affecting the gating at the aperture in the absence of intracellular glutamate. Mg(2+) serves as cofactor. Mn(2+) is required as a cofactor. In terms of processing, palmitoylated; undergoes autopalmitoylation. Post-translationally, acetylated by EP300/p300; acetylation is stimulated by increased glutamine levels and promotes ubiquitin-mediated proteasomal degradation. Ubiquitinated by ZNRF1. Ubiquitinated by the DCX (DDB1-CUL4-X-box) E3 ubiquitin-protein ligase complex called CRL4(CRBN), leading to proteasomal degradation.

The protein resides in the cytoplasm. It localises to the cytosol. Its subcellular location is the microsome. It is found in the mitochondrion. The protein localises to the cell membrane. The enzyme catalyses L-glutamate + NH4(+) + ATP = L-glutamine + ADP + phosphate + H(+). It catalyses the reaction L-cysteinyl-[protein] + hexadecanoyl-CoA = S-hexadecanoyl-L-cysteinyl-[protein] + CoA. Glutamine synthetase activity is inhibited by methionine sulfoximine (MSO). Its function is as follows. Glutamine synthetase that catalyzes the ATP-dependent conversion of glutamate and ammonia to glutamine. Its role depends on tissue localization: in the brain, it regulates the levels of toxic ammonia and converts neurotoxic glutamate to harmless glutamine, whereas in the liver, it is one of the enzymes responsible for the removal of ammonia. Plays a key role in ammonium detoxification during erythropoiesis: the glutamine synthetase activity is required to remove ammonium generated by porphobilinogen deaminase (HMBS) during heme biosynthesis to prevent ammonium accumulation and oxidative stress. Essential for proliferation of fetal skin fibroblasts. Independently of its glutamine synthetase activity, required for endothelial cell migration during vascular development. Involved in angiogenesis by regulating membrane localization and activation of the GTPase RHOJ, possibly by promoting RHOJ palmitoylation. May act as a palmitoyltransferase for RHOJ: able to autopalmitoylate and then transfer the palmitoyl group to RHOJ. Plays a role in ribosomal 40S subunit biogenesis. Through the interaction with BEST2, inhibits BEST2 channel activity by affecting the gating at the aperture in the absence of intracellular L-glutamate, but sensitizes BEST2 to intracellular L-glutamate, which promotes the opening of BEST2 and thus relieves its inhibitory effect on BEST2. The sequence is that of Glutamine synthetase from Sus scrofa (Pig).